The following is a 259-amino-acid chain: Large ribosomal subunit protein eL8 (259 aa).

Residues Met1–Asn24 form a disordered region. Phosphoserine is present on residues Ser11 and Ser33.

Belongs to the eukaryotic ribosomal protein eL8 family. As to quaternary structure, component of the large ribosomal subunit (LSU). Mature yeast ribosomes consist of a small (40S) and a large (60S) subunit. The 40S small subunit contains 1 molecule of ribosomal RNA (18S rRNA) and at least 33 different proteins. The large 60S subunit contains 3 rRNA molecules (25S, 5.8S and 5S rRNA) and at least 46 different proteins.

The protein resides in the cytoplasm. Component of the ribosome, a large ribonucleoprotein complex responsible for the synthesis of proteins in the cell. The small ribosomal subunit (SSU) binds messenger RNAs (mRNAs) and translates the encoded message by selecting cognate aminoacyl-transfer RNA (tRNA) molecules. The large subunit (LSU) contains the ribosomal catalytic site termed the peptidyl transferase center (PTC), which catalyzes the formation of peptide bonds, thereby polymerizing the amino acids delivered by tRNAs into a polypeptide chain. The nascent polypeptides leave the ribosome through a tunnel in the LSU and interact with protein factors that function in enzymatic processing, targeting, and the membrane insertion of nascent chains at the exit of the ribosomal tunnel. The chain is Large ribosomal subunit protein eL8 (rpl8) from Schizosaccharomyces pombe (strain 972 / ATCC 24843) (Fission yeast).